The chain runs to 399 residues: Acetate kinase (399 aa).

N10 contributes to the Mg(2+) binding site. ATP is bound at residue K17. R91 provides a ligand contact to substrate. The Proton donor/acceptor role is filled by D148. ATP-binding positions include 208–212 (HLGNG), 283–285 (DCR), and 331–335 (GIGEN). E385 contacts Mg(2+).

The protein belongs to the acetokinase family. As to quaternary structure, homodimer. Mg(2+) is required as a cofactor. It depends on Mn(2+) as a cofactor.

The protein localises to the cytoplasm. It catalyses the reaction acetate + ATP = acetyl phosphate + ADP. Its pathway is metabolic intermediate biosynthesis; acetyl-CoA biosynthesis; acetyl-CoA from acetate: step 1/2. Its function is as follows. Catalyzes the formation of acetyl phosphate from acetate and ATP. Can also catalyze the reverse reaction. In Shewanella oneidensis (strain ATCC 700550 / JCM 31522 / CIP 106686 / LMG 19005 / NCIMB 14063 / MR-1), this protein is Acetate kinase.